The primary structure comprises 276 residues: Stathmin domain-containing protein 1 (276 aa).

Disordered regions lie at residues M1–S40, V61–Q106, and G226–I250. The N-myristoyl glycine moiety is linked to residue G2. Polar residues-rich tracts occupy residues G68 to S78 and D87 to L100. The SLD domain maps to Q118 to K244.

This chain is Stathmin domain-containing protein 1 (STMND1), found in Homo sapiens (Human).